A 178-amino-acid chain; its full sequence is Transcription factor E (178 aa).

In terms of domain architecture, HTH TFE/IIEalpha-type spans 3–86 (AHEALAEIAG…YWRITDEPIQ (84 aa)).

It belongs to the TFE family. As to quaternary structure, monomer. Interaction with RNA polymerase subunits RpoF and RpoE is necessary for Tfe stimulatory transcription activity. Able to interact with Tbp and RNA polymerase in the absence of DNA promoter. Interacts both with the preinitiation and elongation complexes.

Functionally, transcription factor that plays a role in the activation of archaeal genes transcribed by RNA polymerase. Facilitates transcription initiation by enhancing TATA-box recognition by TATA-box-binding protein (Tbp), and transcription factor B (Tfb) and RNA polymerase recruitment. Not absolutely required for transcription in vitro, but particularly important in cases where Tbp or Tfb function is not optimal. It dynamically alters the nucleic acid-binding properties of RNA polymerases by stabilizing the initiation complex and destabilizing elongation complexes. Seems to translocate with the RNA polymerase following initiation and acts by binding to the non template strand of the transcription bubble in elongation complexes. The protein is Transcription factor E of Thermofilum pendens (strain DSM 2475 / Hrk 5).